A 105-amino-acid chain; its full sequence is Small ribosomal subunit protein uS10 (105 aa).

Belongs to the universal ribosomal protein uS10 family. As to quaternary structure, part of the 30S ribosomal subunit.

Its function is as follows. Involved in the binding of tRNA to the ribosomes. The chain is Small ribosomal subunit protein uS10 from Oleidesulfovibrio alaskensis (strain ATCC BAA-1058 / DSM 17464 / G20) (Desulfovibrio alaskensis).